A 271-amino-acid polypeptide reads, in one-letter code: Proteasome inhibitor PI31 subunit (271 aa).

N-acetylalanine is present on Ala-2. The important for homodimerization and interaction with FBXO7 stretch occupies residues Ala-2–Asn-150. Ser-153 is subject to Phosphoserine. Residue Arg-205 is modified to Omega-N-methylarginine. At Arg-219 the chain carries Asymmetric dimethylarginine. Positions Ile-222–Leu-271 are disordered. Omega-N-methylarginine is present on Arg-231. A compositionally biased stretch (pro residues) spans Thr-251–Gly-265. Ser-252 carries the post-translational modification Phosphoserine.

It belongs to the proteasome inhibitor PI31 family. In terms of assembly, monomer and homodimer. Interacts with FBXO7. Interacts with the 20S proteasome.

It localises to the cytoplasm. The protein resides in the endoplasmic reticulum. Its function is as follows. Plays an important role in control of proteasome function. Inhibits the hydrolysis of protein and peptide substrates by the 20S proteasome. Also inhibits the activation of the proteasome by the proteasome regulatory proteins PA700 and PA28. In Homo sapiens (Human), this protein is Proteasome inhibitor PI31 subunit (PSMF1).